Here is an 81-residue protein sequence, read N- to C-terminus: Photosystem I iron-sulfur center (81 aa).

2 4Fe-4S ferredoxin-type domains span residues 1–31 (MSHT…MVPW) and 37–68 (GQIA…IRVY). [4Fe-4S] cluster-binding residues include cysteine 11, cysteine 14, cysteine 17, cysteine 21, cysteine 48, cysteine 51, cysteine 54, and cysteine 58.

The cyanobacterial PSI reaction center is composed of one copy each of PsaA,B,C,D,E,F,I,J,K,L,M and X, and forms trimeric complexes. Requires [4Fe-4S] cluster as cofactor.

The protein resides in the cellular thylakoid membrane. The catalysed reaction is reduced [plastocyanin] + hnu + oxidized [2Fe-2S]-[ferredoxin] = oxidized [plastocyanin] + reduced [2Fe-2S]-[ferredoxin]. Its function is as follows. Apoprotein for the two 4Fe-4S centers FA and FB of photosystem I (PSI); essential for photochemical activity. FB is the terminal electron acceptor of PSI, donating electrons to ferredoxin. The C-terminus interacts with PsaA/B/D and helps assemble the protein into the PSI complex. Required for binding of PsaD and PsaE to PSI. PSI is a plastocyanin/cytochrome c6-ferredoxin oxidoreductase, converting photonic excitation into a charge separation, which transfers an electron from the donor P700 chlorophyll pair to the spectroscopically characterized acceptors A0, A1, FX, FA and FB in turn. The protein is Photosystem I iron-sulfur center of Acaryochloris marina (strain MBIC 11017).